We begin with the raw amino-acid sequence, 775 residues long: Endothelin-converting enzyme-like 1 (775 aa).

The Cytoplasmic portion of the chain corresponds to 1–61 (MEAPYSMTAH…LPRWNRREVC (61 aa)). Positions 23–51 (CGTGGARGTSLPPGFPRSSGRSASGARSG) are disordered. Low complexity predominate over residues 32–51 (SLPPGFPRSSGRSASGARSG). The helical; Signal-anchor for type II membrane protein transmembrane segment at 62–82 (LLSGLVFAAGLCAILAAMLAL) threads the bilayer. The Lumenal portion of the chain corresponds to 83–775 (KYLGPGAAGT…MNPVHKCSVW (693 aa)). Residues 99–775 (GCPERKAFAR…MNPVHKCSVW (677 aa)) form the Peptidase M13 domain. Cystine bridges form between C124/C760, C132/C720, C188/C441, and C649/C772. 2 N-linked (GlcNAc...) asparagine glycosylation sites follow: N255 and N322. A Zn(2+)-binding site is contributed by H612. E613 is a catalytic residue. H616 provides a ligand contact to Zn(2+). N656 carries an N-linked (GlcNAc...) asparagine glycan. E672 provides a ligand contact to Zn(2+). D676 functions as the Proton donor in the catalytic mechanism.

This sequence belongs to the peptidase M13 family. The cofactor is Zn(2+). As to expression, highly expressed in the CNS, in particular in neurons of the caudate putamen, diagonal band, the paraventricular nucleus of the thalamus, part of the hypothalamus, in cranial motor nuclei, inferior olive, and substantia gelatinosa of the spinal tract trigeminal nucleus. Not detected in cerebral cortex, hippocampus and cerebellum.

It localises to the membrane. May contribute to the degradation of peptide hormones and be involved in the inactivation of neuronal peptides. Cleaves the synthetic substrate Z-Gly-Gly-Leu-pNA and releases pNA. May protect against C2-ceramide-induced apoptosis. This is Endothelin-converting enzyme-like 1 (Ecel1) from Rattus norvegicus (Rat).